The chain runs to 435 residues: Endosome-associated-trafficking regulator 1 (435 aa).

A phosphoserine mark is found at serine 18 and serine 147. Disordered stretches follow at residues alanine 136–serine 185 and glutamate 225–aspartate 251. A compositionally biased stretch (acidic residues) spans leucine 173–threonine 182. The interval leucine 173 to proline 198 is required for interaction with PTPN13. A compositionally biased stretch (low complexity) spans serine 240–alanine 250. A phosphoserine mark is found at serine 243 and serine 247. The stretch at aspartate 261–cysteine 371 forms a coiled coil.

The protein belongs to the ENTR1 family. Found in a complex with ENTR1, PTPN13 and GIT1. Interacts with PTPN13 (via the FERM domain). Interacts (via N-terminus) with GIT1 (via N- and C-terminus); this interaction is direct. Interacts with NOD2. Interacts (via N-terminus) with IFT88. Interacts with VPS35. In terms of processing, phosphorylated. In terms of tissue distribution, expressed in the colon (at protein level).

It is found in the cytoplasm. The protein localises to the early endosome. Its subcellular location is the endosome. It localises to the recycling endosome. The protein resides in the midbody. It is found in the cytoskeleton. The protein localises to the microtubule organizing center. Its subcellular location is the centrosome. It localises to the cilium basal body. In terms of biological role, endosome-associated protein that plays a role in membrane receptor sorting, cytokinesis and ciliogenesis. Involved in the endosome-to-plasma membrane trafficking and recycling of SNX27-retromer-dependent cargo proteins, such as GLUT1. Involved in the regulation of cytokinesis; the function may involve PTPN13 and GIT1. Plays a role in the formation of cilia. Involved in cargo protein localization, such as PKD2, at primary cilia. Involved in the presentation of the tumor necrosis factor (TNF) receptor TNFRSF1A on the cell surface, and hence in the modulation of the TNF-induced apoptosis. The chain is Endosome-associated-trafficking regulator 1 from Homo sapiens (Human).